Reading from the N-terminus, the 60-residue chain is Large ribosomal subunit protein bL32 (60 aa).

Residues 1–19 (MGVPKRKTSKGRRDKRRAH) are compositionally biased toward basic residues. The interval 1–20 (MGVPKRKTSKGRRDKRRAHL) is disordered.

This sequence belongs to the bacterial ribosomal protein bL32 family.

The sequence is that of Large ribosomal subunit protein bL32 from Syntrophobacter fumaroxidans (strain DSM 10017 / MPOB).